The chain runs to 229 residues: 3-dehydroquinate dehydratase (229 aa).

Residues 29-31 and Arg56 contribute to the 3-dehydroquinate site; that span reads ELR. His120 serves as the catalytic Proton donor/acceptor. Lys146 acts as the Schiff-base intermediate with substrate in catalysis. 3-dehydroquinate contacts are provided by Arg187, Thr208, and Gln212.

This sequence belongs to the type-I 3-dehydroquinase family. As to quaternary structure, homodimer.

The catalysed reaction is 3-dehydroquinate = 3-dehydroshikimate + H2O. The protein operates within metabolic intermediate biosynthesis; chorismate biosynthesis; chorismate from D-erythrose 4-phosphate and phosphoenolpyruvate: step 3/7. In terms of biological role, involved in the third step of the chorismate pathway, which leads to the biosynthesis of aromatic amino acids. Catalyzes the cis-dehydration of 3-dehydroquinate (DHQ) and introduces the first double bond of the aromatic ring to yield 3-dehydroshikimate. The polypeptide is 3-dehydroquinate dehydratase (Haloarcula marismortui (strain ATCC 43049 / DSM 3752 / JCM 8966 / VKM B-1809) (Halobacterium marismortui)).